The primary structure comprises 550 residues: Glucose-6-phosphate isomerase (550 aa).

Residue glutamate 357 is the Proton donor of the active site. Residues histidine 388 and lysine 516 contribute to the active site.

This sequence belongs to the GPI family.

The protein resides in the cytoplasm. It carries out the reaction alpha-D-glucose 6-phosphate = beta-D-fructose 6-phosphate. The protein operates within carbohydrate biosynthesis; gluconeogenesis. It functions in the pathway carbohydrate degradation; glycolysis; D-glyceraldehyde 3-phosphate and glycerone phosphate from D-glucose: step 2/4. Catalyzes the reversible isomerization of glucose-6-phosphate to fructose-6-phosphate. The sequence is that of Glucose-6-phosphate isomerase from Psychromonas ingrahamii (strain DSM 17664 / CCUG 51855 / 37).